The chain runs to 296 residues: NAD kinase (296 aa).

The active-site Proton acceptor is the Asp-78. NAD(+)-binding positions include 78-79 (DG), 152-153 (ND), Arg-180, Asp-182, and Gln-251.

Belongs to the NAD kinase family. The cofactor is a divalent metal cation.

It is found in the cytoplasm. The enzyme catalyses NAD(+) + ATP = ADP + NADP(+) + H(+). In terms of biological role, involved in the regulation of the intracellular balance of NAD and NADP, and is a key enzyme in the biosynthesis of NADP. Catalyzes specifically the phosphorylation on 2'-hydroxyl of the adenosine moiety of NAD to yield NADP. The sequence is that of NAD kinase from Neisseria gonorrhoeae (strain ATCC 700825 / FA 1090).